A 301-amino-acid chain; its full sequence is N-carbamoylputrescine amidase (301 aa).

Positions 11 to 269 (VSVAAVQFAC…EDVLVAEFDL (259 aa)) constitute a CN hydrolase domain. Residue Glu50 is the Proton acceptor of the active site. Residue Lys123 is the Proton donor of the active site. Cys160 functions as the Nucleophile in the catalytic mechanism.

It belongs to the carbon-nitrogen hydrolase superfamily. Homooctamer.

The enzyme catalyses N-carbamoylputrescine + H2O + 2 H(+) = putrescine + NH4(+) + CO2. It functions in the pathway amine and polyamine biosynthesis; putrescine biosynthesis via agmatine pathway; putrescine from N-carbamoylputrescine (amidase route): step 1/1. Its function is as follows. Involved in polyamine biosynthesis. The chain is N-carbamoylputrescine amidase (CPA) from Oryza sativa subsp. japonica (Rice).